We begin with the raw amino-acid sequence, 847 residues long: Leucine--tRNA ligase (847 aa).

Positions 43 to 53 (PYPSGKLHMGH) match the 'HIGH' region motif. Positions 607-611 (KMSKS) match the 'KMSKS' region motif. ATP is bound at residue K610.

It belongs to the class-I aminoacyl-tRNA synthetase family.

It is found in the cytoplasm. It carries out the reaction tRNA(Leu) + L-leucine + ATP = L-leucyl-tRNA(Leu) + AMP + diphosphate. This Buchnera aphidicola subsp. Cinara cedri (strain Cc) protein is Leucine--tRNA ligase.